The primary structure comprises 540 residues: Chaperonin GroEL (540 aa).

ATP is bound by residues 29–32, 86–90, Gly-413, 476–478, and Asp-492; these read TLGP, DGTTT, and NAA.

Belongs to the chaperonin (HSP60) family. As to quaternary structure, forms a cylinder of 14 subunits composed of two heptameric rings stacked back-to-back. Interacts with the co-chaperonin GroES.

Its subcellular location is the cytoplasm. It catalyses the reaction ATP + H2O + a folded polypeptide = ADP + phosphate + an unfolded polypeptide.. Its function is as follows. Together with its co-chaperonin GroES, plays an essential role in assisting protein folding. The GroEL-GroES system forms a nano-cage that allows encapsulation of the non-native substrate proteins and provides a physical environment optimized to promote and accelerate protein folding. The polypeptide is Chaperonin GroEL (Streptococcus agalactiae).